The primary structure comprises 238 residues: Ion-translocating oxidoreductase complex subunit E (238 aa).

The next 6 helical transmembrane spans lie at 20-40 (ALVQ…VVNA), 41-61 (LGLG…VSLI), 72-92 (PAFV…MKAF), 95-115 (ELYQ…AVLG), 130-150 (AVDG…VGAV), and 185-205 (NVIF…LIAA).

It belongs to the NqrDE/RnfAE family. The complex is composed of six subunits: RnfA, RnfB, RnfC, RnfD, RnfE and RnfG.

It localises to the cell inner membrane. Its function is as follows. Part of a membrane-bound complex that couples electron transfer with translocation of ions across the membrane. The polypeptide is Ion-translocating oxidoreductase complex subunit E (Cellvibrio japonicus (strain Ueda107) (Pseudomonas fluorescens subsp. cellulosa)).